The sequence spans 1866 residues: Protein NLRC5 (1866 aa).

Residues 105–135 (GAEGKSQPESQLHHGLKRPHQSCGSSPRRKQ) form a disordered region. The NACHT domain maps to 222-539 (RVTVLLGKAG…PKVNKDTLTQ (318 aa)). An ATP-binding site is contributed by 228–235 (GKAGMGKT). LRR repeat units lie at residues 599-622 (LKKLATRKLTGPKVVELCHCVDET), 713-737 (MGRLQMLGLAGSKITARGISHLVKA), 741-765 (CPQLKEVSFRDNQLSDQVVLNIVEV), 769-792 (LPRLRKLDLSSNSICVSTLLCLAR), 869-892 (GPHLEEVDLSGNQLEDEGCRLMAE), 897-921 (LHIARKLDLSNNGLSVAGVHCVLRA), 930-953 (ELHISLQHKTVIFMFAQEPEEQKG), 976-1000 (SRRMRLTHCGLQEKHLEQLCKALGG), 1004-1026 (LGHLHLDFSGNALGDEGAARLAQ), 1031-1058 (LGALQSLNLSENGLSLDAVLGLVRCFST), 1138-1161 (LELQLSCEFLSDQSLETLLDCLPQ), 1162-1184 (LPQLSLLQLSQTGLSPKSPFLLA), 1242-1265 (CKDLSQVDLSANLLGDSGLRCLLE), 1272-1294 (ISGLLDLSHNSISQESALYLLET), 1462-1488 (CARLQQLSLSQVNLCEDDDASSLLLQS), 1493-1516 (LSELKTFRLTSSCVSTEGLAHLAS), 1521-1544 (CHHLEELDLSNNQFDEEGTKALMR), 1554-1577 (RLDLSHLLLNSSTLALLTHRLSQM), 1578-1600 (TCLQSLRLNRNSIGDVGCCHLSE), 1605-1628 (ATSLEELDLSHNQIGDAGVQHLAT), 1633-1656 (LPELRKIDLSGNSISSAGGVQLAE), 1661-1684 (CRRLEELMLGCNALGDPTALGLAQ), 1687-1714 (PQHLRVLHLPFSHLGPGGALSLAQALDG), 1715-1739 (SPHLEEISLAENNLAGGVLRFCMEL), 1741-1762 (LLRQIDLVSCKIDNQTAKLLTS), and 1795-1818 (MGRLKRVDLEKNQITALGAWLLAE).

This sequence belongs to the NLRP family. Interacts with CHUK and IKBKB; prevents CHUK and IKBKB phosphorylation and inhibits their kinase activity. Interacts with RIGI and IFIH1; blocks the interaction of MAVS to RIGI. As to expression, expressed in spleen, thymus, lung, brain, tonsil, heart and prostate.

The protein resides in the cytoplasm. Probable regulator of the NF-kappa-B and type I interferon signaling pathways. May also regulate the type II interferon signaling pathway. Plays a role in homeostatic control of innate immunity and in antiviral defense mechanisms. This chain is Protein NLRC5 (NLRC5), found in Homo sapiens (Human).